Consider the following 338-residue polypeptide: Anthranilate phosphoribosyltransferase (338 aa).

5-phospho-alpha-D-ribose 1-diphosphate is bound by residues Gly81, 84–85 (GD), Thr89, 91–94 (NIST), 109–117 (KHGNRALSS), and Ala121. Gly81 lines the anthranilate pocket. Ser93 serves as a coordination point for Mg(2+). Asn112 contributes to the anthranilate binding site. Anthranilate is bound at residue Arg167. Residues Asp225 and Glu226 each contribute to the Mg(2+) site.

This sequence belongs to the anthranilate phosphoribosyltransferase family. As to quaternary structure, homodimer. Requires Mg(2+) as cofactor.

It catalyses the reaction N-(5-phospho-beta-D-ribosyl)anthranilate + diphosphate = 5-phospho-alpha-D-ribose 1-diphosphate + anthranilate. Its pathway is amino-acid biosynthesis; L-tryptophan biosynthesis; L-tryptophan from chorismate: step 2/5. Functionally, catalyzes the transfer of the phosphoribosyl group of 5-phosphorylribose-1-pyrophosphate (PRPP) to anthranilate to yield N-(5'-phosphoribosyl)-anthranilate (PRA). This is Anthranilate phosphoribosyltransferase from Rhizobium johnstonii (strain DSM 114642 / LMG 32736 / 3841) (Rhizobium leguminosarum bv. viciae).